The primary structure comprises 545 residues: CTP synthase (545 aa).

Residues 1–266 are amidoligase domain; it reads MTTNYIFVTG…DDYICKRFSL (266 aa). Serine 14 is a CTP binding site. Serine 14 is a UTP binding site. ATP contacts are provided by residues 15–20 and aspartate 72; that span reads SLGKGI. 2 residues coordinate Mg(2+): aspartate 72 and glutamate 140. CTP contacts are provided by residues 147–149, 187–192, and lysine 223; these read DIE and KTKPTQ. UTP contacts are provided by residues 187–192 and lysine 223; that span reads KTKPTQ. 239–241 contacts ATP; sequence KDV. Residues 291–542 enclose the Glutamine amidotransferase type-1 domain; it reads TIGMVGKYIE…VKAASEYQKR (252 aa). L-glutamine is bound at residue glycine 352. Cysteine 379 functions as the Nucleophile; for glutamine hydrolysis in the catalytic mechanism. L-glutamine-binding positions include 380–383, glutamate 403, and arginine 470; that span reads LGMQ. Catalysis depends on residues histidine 515 and glutamate 517.

The protein belongs to the CTP synthase family. Homotetramer.

The catalysed reaction is UTP + L-glutamine + ATP + H2O = CTP + L-glutamate + ADP + phosphate + 2 H(+). The enzyme catalyses L-glutamine + H2O = L-glutamate + NH4(+). It catalyses the reaction UTP + NH4(+) + ATP = CTP + ADP + phosphate + 2 H(+). Its pathway is pyrimidine metabolism; CTP biosynthesis via de novo pathway; CTP from UDP: step 2/2. Allosterically activated by GTP, when glutamine is the substrate; GTP has no effect on the reaction when ammonia is the substrate. The allosteric effector GTP functions by stabilizing the protein conformation that binds the tetrahedral intermediate(s) formed during glutamine hydrolysis. Inhibited by the product CTP, via allosteric rather than competitive inhibition. Its function is as follows. Catalyzes the ATP-dependent amination of UTP to CTP with either L-glutamine or ammonia as the source of nitrogen. Regulates intracellular CTP levels through interactions with the four ribonucleotide triphosphates. The protein is CTP synthase of Klebsiella pneumoniae subsp. pneumoniae (strain ATCC 700721 / MGH 78578).